A 465-amino-acid polypeptide reads, in one-letter code: Argininosuccinate lyase (465 aa).

It belongs to the lyase 1 family. Argininosuccinate lyase subfamily.

The protein localises to the cytoplasm. It catalyses the reaction 2-(N(omega)-L-arginino)succinate = fumarate + L-arginine. Its pathway is amino-acid biosynthesis; L-arginine biosynthesis; L-arginine from L-ornithine and carbamoyl phosphate: step 3/3. The protein is Argininosuccinate lyase of Halorhodospira halophila (strain DSM 244 / SL1) (Ectothiorhodospira halophila (strain DSM 244 / SL1)).